A 309-amino-acid chain; its full sequence is Homoserine O-succinyltransferase (309 aa).

The Acyl-thioester intermediate role is filled by C142. Residues K163 and S192 each contribute to the substrate site. H235 acts as the Proton acceptor in catalysis. Residue E237 is part of the active site. R249 is a substrate binding site.

Belongs to the MetA family.

It localises to the cytoplasm. It catalyses the reaction L-homoserine + succinyl-CoA = O-succinyl-L-homoserine + CoA. It functions in the pathway amino-acid biosynthesis; L-methionine biosynthesis via de novo pathway; O-succinyl-L-homoserine from L-homoserine: step 1/1. Its function is as follows. Transfers a succinyl group from succinyl-CoA to L-homoserine, forming succinyl-L-homoserine. This is Homoserine O-succinyltransferase from Klebsiella pneumoniae subsp. pneumoniae (strain ATCC 700721 / MGH 78578).